The following is a 409-amino-acid chain: Peptidase T (409 aa).

His-78 lines the Zn(2+) pocket. Asp-80 is an active-site residue. Asp-140 contributes to the Zn(2+) binding site. Catalysis depends on Glu-173, which acts as the Proton acceptor. The Zn(2+) site is built by Glu-174, Asp-196, and His-379.

Belongs to the peptidase M20B family. It depends on Zn(2+) as a cofactor.

It localises to the cytoplasm. It catalyses the reaction Release of the N-terminal residue from a tripeptide.. In terms of biological role, cleaves the N-terminal amino acid of tripeptides. The polypeptide is Peptidase T (Serratia proteamaculans (strain 568)).